Consider the following 329-residue polypeptide: Ankyrin repeat and SOCS box protein 5 (329 aa).

ANK repeat units lie at residues 69–98 (ADRSPLHEAASQGRLLALRTLLSQGYNVNA), 102–131 (DHITPLHEACLGDHVACARTLLEAGANVNA), 135–164 (DGVTPLFNACSQGSTSCTELLLEYGAKAQL), 167–196 (CLPSPTHEAASKGHHEFLDLLISWGIDVDQ), 200–229 (HLGTPLYVACMSQQFHCIWKLLYAGADVQK), and 232–261 (YWDTPLHAAAQQSSTEIVNLLIEFGADINA). One can recognise an SOCS box domain in the interval 278-329 (MVERILLQHEATPSSLCQLCRLCIRNYIGRPRLHLIPQLQLPTLLQNFLQYR).

Belongs to the ankyrin SOCS box (ASB) family. Expressed in endothelial and smooth muscle cells of collateral arteries as well as in satellite cells.

Its pathway is protein modification; protein ubiquitination. In terms of biological role, may be a substrate-recognition component of a SCF-like ECS (Elongin-Cullin-SOCS-box protein) E3 ubiquitin-protein ligase complex which mediates the ubiquitination and subsequent proteasomal degradation of target proteins. May play a role in the initiation of arteriogenesis. The chain is Ankyrin repeat and SOCS box protein 5 (ASB5) from Oryctolagus cuniculus (Rabbit).